The primary structure comprises 384 residues: uncharacterized protein (384 aa).

The 167-residue stretch at 137-303 folds into the Integrase catalytic domain; the sequence is EHDAPNRLWQ…VPGSRYQPSA (167 aa).

This is an uncharacterized protein from Escherichia coli (strain K12).